The sequence spans 412 residues: Burnettramic acids biosynthesis cluster protein E (412 aa).

Disordered stretches follow at residues 1–66 (MAIA…KKIR), 308–342 (RNPTSPLAAPPRRGFTSKLADPNDDTNKSPISLAT), and 386–412 (SRAESIMATEATTEPSVQSDDAEAAKG). Residues 36–58 (EDEQWALDELQDELCQEEPSDSE) show a composition bias toward acidic residues. Residues 395 to 404 (EATTEPSVQS) are compositionally biased toward polar residues.

The protein operates within mycotoxin biosynthesis. Part of the gene cluster that mediates the biosynthesis of burnettramic acids, an unusual class of bolaamphiphilic pyrrolizidinediones that display potent antibacterial, antifungal, and cytotoxic activities. The first step of the biosynthesis of burnettramic acids is the hydroxylation of proline by the proline hydroxylase buaE to generate 4-hydroxyproline. The PKS-NRPS buaA and trans-enoyl reductase buaC construct the highly reduced polyketide chain, and the condensation (C) domain of buaA then catalyzes the amide bond formation with the activated 4-hydroxyproline. This is followed by the R domain releasing the nascent polyketide-peptide directly via a Dieckmann condensation to afford a tetramic acid fused to the hydroxyproline, generating the bicyclic pyrrolidinedione moiety. The cytochrome P450 monooxygenases buaD and buaG are likely responsible for the multiple hydroxylations on the polyketide chain and its terminus, although in the heterologous context, buaD does not appear to be required. Therefore, while buaG may be a multifunctional cytochrome P450 monooxygenase, it cannot be ruled out that the two secondary alcohols on the polyketide chain could have an acetate origin. Finally, the glycosyltransferase buaB transfers beta-D-mannose to the aglycone burnettramic acid A to form burnettramic acid A. Burnettramic acid B is a minor cis-pyrrolizidine epimer of burnettramic acid A and it is likely that small amounts of it form naturally in acidic environments. The role of the uncharacterized protein buaF in the biosynthesis of burnettramic acids has still to be determined. The polypeptide is Burnettramic acids biosynthesis cluster protein E (Petromyces alliaceus (Aspergillus alliaceus)).